The primary structure comprises 1125 residues: Probable phospholipid-transporting ATPase IIB (1125 aa).

The Cytoplasmic portion of the chain corresponds to 1–131 (MADGIPLNPV…IKNQKYNIVT (131 aa)). Residues 132–152 (FVPGVLYQQFKFFLNLYFLVV) traverse the membrane as a helical segment. The Extracellular segment spans residues 153–161 (ACSQFVPSL). Residues 162-182 (KIGYLYTYWAPLGFVLAVTMV) traverse the membrane as a helical segment. Topologically, residues 183-369 (REAVDEVRRC…LDLELNRLTK (187 aa)) are cytoplasmic. The chain crosses the membrane as a helical span at residues 370 to 390 (ALFLAQVVLSVVMVALQGFLG). Residues 391–395 (PWFRN) are Extracellular-facing. The chain crosses the membrane as a helical span at residues 396–415 (LFRFVVLFSYIIPISLRVNL). Residues 416-928 (DMGKSAYGWM…ALGQFVMHRG (513 aa)) lie on the Cytoplasmic side of the membrane. Asp455 acts as the 4-aspartylphosphate intermediate in catalysis. ATP-binding residues include Asp455, Lys456, and Thr457. Residue Asp455 coordinates Mg(2+). Thr457 contributes to the Mg(2+) binding site. The span at 500-511 (QSNGSSASSTPS) shows a compositional bias: low complexity. Disordered regions lie at residues 500 to 525 (QSNGSSASSTPSRKPQPPAPKVRKSV) and 552 to 574 (GANAEPESTEADQDFSDDNRTYQ). Residues 558–567 (ESTEADQDFS) are compositionally biased toward acidic residues. Positions 580, 622, 627, 646, 675, 676, 755, 756, 757, 837, and 843 each coordinate ATP. Asp863 is a binding site for Mg(2+). Positions 866 and 867 each coordinate ATP. Asp867 contacts Mg(2+). A helical transmembrane segment spans residues 929–949 (MIISTMQAVFSSIFYFASVPL). The Extracellular portion of the chain corresponds to 950-951 (YQ). Residues 952-972 (GFLMVGYATIYTMFPVFSLVL) traverse the membrane as a helical segment. At 973–1001 (DQDVKPEMALLYPELYKDLTKGRSLSFKT) the chain is on the cytoplasmic side. A helical membrane pass occupies residues 1002–1022 (FLIWVLISIYQGGILMYGALV). The Extracellular segment spans residues 1023–1030 (LFDQEFVH). Residues 1031–1051 (VVAISFTALILTELLMVALTI) form a helical membrane-spanning segment. At 1052-1055 (RTWH) the chain is on the cytoplasmic side. The helical transmembrane segment at 1056–1076 (WLMVVAQLISLACYLASLAFL) threads the bilayer. Residues 1077-1088 (NEYFDLSFITTR) lie on the Extracellular side of the membrane. The helical transmembrane segment at 1089 to 1109 (VFLWKVCVITLVSCLPLYIIK) threads the bilayer. At 1110 to 1125 (YLKRKFSPPSYSKLSS) the chain is on the cytoplasmic side.

It belongs to the cation transport ATPase (P-type) (TC 3.A.3) family. Type IV subfamily. Mg(2+) serves as cofactor.

Its subcellular location is the golgi apparatus. It is found in the trans-Golgi network membrane. The enzyme catalyses ATP + H2O + phospholipidSide 1 = ADP + phosphate + phospholipidSide 2.. The chain is Probable phospholipid-transporting ATPase IIB (atp9b) from Danio rerio (Zebrafish).